A 633-amino-acid chain; its full sequence is Threonine--tRNA ligase (633 aa).

One can recognise a TGS domain in the interval 1-61 (MINISFPDGS…DNDCRLRILT (61 aa)). Residues 242–533 (DHRKLGKELD…LIEEYAGRFP (292 aa)) are catalytic. The Zn(2+) site is built by Cys-333, His-384, and His-510.

It belongs to the class-II aminoacyl-tRNA synthetase family. In terms of assembly, homodimer. Requires Zn(2+) as cofactor.

The protein resides in the cytoplasm. The enzyme catalyses tRNA(Thr) + L-threonine + ATP = L-threonyl-tRNA(Thr) + AMP + diphosphate + H(+). Its function is as follows. Catalyzes the attachment of threonine to tRNA(Thr) in a two-step reaction: L-threonine is first activated by ATP to form Thr-AMP and then transferred to the acceptor end of tRNA(Thr). Also edits incorrectly charged L-seryl-tRNA(Thr). The sequence is that of Threonine--tRNA ligase from Rickettsia bellii (strain OSU 85-389).